A 1108-amino-acid chain; its full sequence is Probable arabinosyltransferase A (1108 aa).

A run of 13 helical transmembrane segments spans residues 12-34 (IPRSVAAVAGIAGLLLCLAVPLL), 204-223 (IVMVLGTLAVLTAIVALAVL), 258-280 (VGLATWIADAAVLATLLLWHVVG), 334-356 (VWMRLPATLAGIGCWLIISHWVL), 368-387 (ANRVAVFTAGAVFVAAWLPF), 397-414 (IALGVLVTWMLVERAIAL), 421-443 (AVAVVVALLTATLAPQGLIAVAA), 463-482 (GLLAPLAVLAAALSLILVVV), 531-553 (FAVLVMLLCLFGMLVILLRRGHV), 582-604 (WAVQFGAFAGLAGALGALTAFAC), 616-638 (TLYVTALLFVLAWATSGINGWFY), 653-675 (IASHPVTSMFLTLSIITGLLAAW), and 696-718 (VLASTPLLVVATIMVVGEVASLT). Positions 804–825 (PGLVNSDASPNKPNVAYSDSAG) are disordered.

Belongs to the emb family.

The protein localises to the cell membrane. Its function is as follows. Arabinosyl transferase responsible for the polymerization of arabinose into the arabinan of arabinogalactan. In Mycobacterium avium, this protein is Probable arabinosyltransferase A (embA).